Reading from the N-terminus, the 797-residue chain is N-acetylneuraminate (7)9-O-acetyltransferase (797 aa).

Residues 1–18 (MAALAYNLGKREINHYFS) are Cytoplasmic-facing. The chain crosses the membrane as a helical span at residues 19-39 (VRSAKVLALVAVLLLAACHLA). Topologically, residues 40 to 313 (SRRYRGNDSC…QPRPPLTLIQ (274 aa)) are lumenal. Asparagine 46 is a glycosylation site (N-linked (GlcNAc...) asparagine). Serine 94 (acyl-ester intermediate) is an active-site residue. Asparagine 175 and asparagine 187 each carry an N-linked (GlcNAc...) asparagine glycan. Active-site residues include aspartate 270 and histidine 273. The chain crosses the membrane as a helical span at residues 314–334 (KLAACFFTLSIIGYFIFYVIH). The Cytoplasmic portion of the chain corresponds to 335-363 (RNAHRKNKPCTDLESGEEKKNIINTPVSS). A helical membrane pass occupies residues 364–384 (LEILLQSFCKLGLIMAYFYMC). Topologically, residues 385-395 (DRANLFMKENK) are lumenal. A helical transmembrane segment spans residues 396 to 416 (FYTHSSFFIPIIYILVLGVFY). Over 417-439 (NENTKETKVLNREQTDEWKGWMQ) the chain is Cytoplasmic. The helical transmembrane segment at 440-460 (LVILIYHISGASTFLPVYMHI) threads the bilayer. Residue arginine 461 is a topological domain, lumenal. A helical membrane pass occupies residues 462–482 (VLVAAYLFQTGYGHFSYFWIK). The Cytoplasmic portion of the chain corresponds to 483–486 (GDFG). The chain crosses the membrane as a helical span at residues 487-507 (IHRVCQVLFRLNFLVVVLCIV). Topologically, residues 508 to 513 (MDRPYQ) are lumenal. Residues 514 to 534 (FYYFVPLVTVWFMVIYVTLAL) form a helical membrane-spanning segment. At 535–546 (WPQITQKKANGN) the chain is on the cytoplasmic side. A helical membrane pass occupies residues 547-567 (FFWYLGLLLKLGLLLLCIWFL). The Lumenal portion of the chain corresponds to 568-599 (AYSQGAFEKIFSLWPLSKCFELEGSVYEWWFR). Residues 600-620 (WRLDRYVVFHGVLFAFIYLAL) form a helical membrane-spanning segment. Topologically, residues 621-638 (QRRQILSEGKGEPLFSNK) are cytoplasmic. The chain crosses the membrane as a helical span at residues 639–659 (ISNFLLFVSVVSFLTYSIWAS). The Lumenal segment spans residues 660–671 (SCKNKAECNELH). Residues 672–692 (PSVSVVQIVAFILIRNIPGYA) traverse the membrane as a helical segment. Over 693–698 (RSIYSS) the chain is Cytoplasmic. The chain crosses the membrane as a helical span at residues 699 to 719 (FFAWFGKISLELFICQYHIWL). Residues 720-725 (AADTRG) are Lumenal-facing. The chain crosses the membrane as a helical span at residues 726 to 746 (ILVLIPGNPTLNIIVSTFIFV). Residues 747–770 (CVAHEISQITTDLAQVVIPKDNPS) are Cytoplasmic-facing. The chain crosses the membrane as a helical span at residues 771–791 (LFRRLACTIAFFGGVLILSSI). Residues 792–797 (QDKSRL) are Lumenal-facing.

Belongs to the PC-esterase family. CASD1 subfamily. N-glycosylated. In terms of tissue distribution, ubiquitously expressed.

It localises to the golgi apparatus membrane. It carries out the reaction CMP-N-acetyl-beta-neuraminate + acetyl-CoA = CMP-N-acetyl-9-O-acetyl-beta-neuraminate + CoA. The catalysed reaction is a ganglioside GD3 (d18:1(4E)) + acetyl-CoA = a ganglioside Ac-O-7-GD3(d18:1(4E)) + CoA. The enzyme catalyses CMP-N-acetyl-beta-neuraminate + acetyl-CoA = CMP-N-acetyl-7-O-acetyl-beta-neuraminate + CoA. In terms of biological role, key enzyme in the biosynthesis of O-acetylated (O-Ac) sialoglycans such as gangliosides O-AcGD3 and O-AcGD2, which affect various processes such as cell-cell interactions, host-pathogen recognition. Catalyzes the transfer of an acetyl group from a donor, the acetyl-coenzyme-A molecule (acetyl-CoA), to the C7/8/9 OH-position of a sialic acid residue. The primary site of O-acetyl group transfer on sialic acid seems to depend on cell type and can be C7, from which the O-acetyl group could subsequently migrate to the C8 and then to the C9 position, or at C9 with possibility of migrating to the C8 and then to the C7 position. Together with ST8SIA1 (GD3 synthase) it increases the levels of ganglioside Ac-O-7-GD3. Can transfer the acetyl group from acetyl-CoA to free sialate (N-acetylneuraminate, Neu5Ac) in vitro, but has preferred substrate specificity for CMP-activated sialate (CMP-Neu5Ac), resulting in the formation of 9-O-acetylated CMP-Neu5Ac (CMP-Neu5,9Ac2). CMP-Neu5,9Ac2 may be used by sialyltransferases as a sialate donor for glycoconjugate acceptors such as ganglioside GD3. O-acetylation at position C9 of ganglioside GD3 can counteract the pro-apoptotic effects of the ganglioside GD3 in tumor cells. The polypeptide is N-acetylneuraminate (7)9-O-acetyltransferase (Mus musculus (Mouse)).